We begin with the raw amino-acid sequence, 147 residues long: Cyclic di-AMP receptor B (147 aa).

One can recognise a CBS domain in the interval 18 to 78 (MIEADKVAHV…SIFGLERIEF (61 aa)). 5 residues coordinate 3',3'-c-di-AMP: Lys23, Ala25, Thr46, Ala47, and Arg131.

As to quaternary structure, homodimer. Forms a homodimer with a parallel, head-to-head assembly of the monomers. Under conditions of potassium starvation and corresponding low c-di-AMP levels, apo-DarB specifically interacts with the N-terminal region of the RelA. Under the same conditions, apo-DarB also specifically interacts with the C-terminal part of the pyruvate carboxylase.

Binds c-di-AMP. Binding of c-di-AMP to DarB inhibits the interaction with RelA and PYC. Functionally, involved in the c-di-AMP-dependent regulation of the bacterial stringent response. Modulates the activities of at least two enzymes under conditions of potassium limitation. Apo-DarB regulates the activity of the GTP pyrophosphokinase RelA by interacting directly with RelA, leading to stimulation of (p)ppGpp synthesis and induction of the stringent response. Apo-DarB also regulates pyruvate carboxylase (PYC) at two levels: directly at the protein level by binding to the enzyme and stimulating the synthesis of oxaloacetate and indirectly, by interaction with RelA, which leads to activation of the stringent response and to the increased expression of the pycA gene. Stimulation of these enzymes by DarB is prevented in the presence of cyclic di-AMP (c-di-AMP). This is Cyclic di-AMP receptor B from Bacillus subtilis (strain 168).